Here is a 371-residue protein sequence, read N- to C-terminus: S-adenosylmethionine:tRNA ribosyltransferase-isomerase (371 aa).

The protein belongs to the QueA family. In terms of assembly, monomer.

Its subcellular location is the cytoplasm. The catalysed reaction is 7-aminomethyl-7-carbaguanosine(34) in tRNA + S-adenosyl-L-methionine = epoxyqueuosine(34) in tRNA + adenine + L-methionine + 2 H(+). The protein operates within tRNA modification; tRNA-queuosine biosynthesis. Functionally, transfers and isomerizes the ribose moiety from AdoMet to the 7-aminomethyl group of 7-deazaguanine (preQ1-tRNA) to give epoxyqueuosine (oQ-tRNA). This Prochlorococcus marinus (strain MIT 9303) protein is S-adenosylmethionine:tRNA ribosyltransferase-isomerase.